A 309-amino-acid polypeptide reads, in one-letter code: Tagatose-6-phosphate kinase (309 aa).

Belongs to the carbohydrate kinase PfkB family. LacC subfamily.

The catalysed reaction is D-tagatofuranose 6-phosphate + ATP = D-tagatofuranose 1,6-bisphosphate + ADP + H(+). It functions in the pathway carbohydrate metabolism; D-tagatose 6-phosphate degradation; D-glyceraldehyde 3-phosphate and glycerone phosphate from D-tagatose 6-phosphate: step 1/2. This chain is Tagatose-6-phosphate kinase, found in Streptococcus pneumoniae (strain Taiwan19F-14).